Consider the following 302-residue polypeptide: Formylmethanofuran--tetrahydromethanopterin formyltransferase (302 aa).

It belongs to the FTR family. Homotetramer.

Its subcellular location is the cytoplasm. The catalysed reaction is N-formylmethanofuran + 5,6,7,8-tetrahydromethanopterin + H(+) = N(5)-formyl-5,6,7,8-tetrahydromethanopterin + methanofuran. Its pathway is one-carbon metabolism; formaldehyde degradation; formate from formaldehyde (H(4)MPT route): step 4/5. In terms of biological role, catalyzes the transfer of a formyl group from 5-formyl tetrahydromethanopterin (5-formyl-H(4)MPT) to methanofuran (MFR) to produce formylmethanofuran (formyl-MFR) and tetrahydromethanopterin (H(4)MPT). This Methylobacillus flagellatus (strain ATCC 51484 / DSM 6875 / VKM B-1610 / KT) protein is Formylmethanofuran--tetrahydromethanopterin formyltransferase.